The primary structure comprises 77 residues: Small ribosomal subunit protein uS17 (77 aa).

Belongs to the universal ribosomal protein uS17 family. As to quaternary structure, part of the 30S ribosomal subunit.

Its function is as follows. One of the primary rRNA binding proteins, it binds specifically to the 5'-end of 16S ribosomal RNA. The protein is Small ribosomal subunit protein uS17 of Rickettsia conorii (strain ATCC VR-613 / Malish 7).